Consider the following 375-residue polypeptide: CMP-N-acetylneuraminate-beta-1,4-galactoside alpha-2,3-sialyltransferase (375 aa).

Topologically, residues 1–8 (MGLLVFVR) are cytoplasmic. A helical; Signal-anchor for type II membrane protein membrane pass occupies residues 9 to 28 (NLLLALCLFLVLGFLYYSAW). Residues 29–375 (KLHLLQWEED…RVITDLSSGI (347 aa)) lie on the Lumenal side of the membrane. Asn80 and Asn171 each carry an N-linked (GlcNAc...) asparagine glycan. Cysteines 160 and 314 form a disulfide.

The protein belongs to the glycosyltransferase 29 family. The soluble form derives from the membrane form by proteolytic processing. In terms of tissue distribution, highly expressed in adult skeletal muscle and in all fetal tissues examined and to a much lesser extent in placenta, lung and liver.

It localises to the golgi apparatus. The protein localises to the golgi stack membrane. Its subcellular location is the secreted. The catalysed reaction is a beta-D-galactosyl-(1-&gt;4)-N-acetyl-beta-D-glucosaminyl derivative + CMP-N-acetyl-beta-neuraminate = an N-acetyl-alpha-neuraminyl-(2-&gt;3)-beta-D-galactosyl-(1-&gt;4)-N-acetyl-beta-D-glucosaminyl derivative + CMP + H(+). It participates in protein modification; protein glycosylation. Functionally, catalyzes the formation of the NeuAc-alpha-2,3-Gal-beta-1,4-GlcNAc-, NeuAc-alpha-2,3-Gal-beta-1,3-GlcNAc- and NeuAc-alpha-2,3-Gal-beta-1,3-GalNAc- sequences found in terminal carbohydrate groups of glycoproteins and glycolipids. The highest activity is toward Gal-beta-1,3-GlcNAc and the lowest toward Gal-beta-1,3-GalNAc. This Homo sapiens (Human) protein is CMP-N-acetylneuraminate-beta-1,4-galactoside alpha-2,3-sialyltransferase (ST3GAL3).